The sequence spans 902 residues: AAA+ ATPase ClpV1 (902 aa).

In terms of domain architecture, Clp R spans 10 to 151; sequence FGKLNSLAYK…KVEALTERFD (142 aa). 2 repeat regions span residues 13 to 78 and 88 to 151; these read LNSL…LDRL and LSSH…ERFD. ATP is bound at residue 237-244; that stretch reads GEAGVGKT. The stretch at 441–559 forms a coiled coil; the sequence is AEVDDSRRRI…AQLSALQGEE (119 aa). 640–647 serves as a coordination point for ATP; sequence GTSGVGKT.

It belongs to the ClpA/ClpB family. Interacts with TagJ.

Its subcellular location is the cytoplasm. Its function is as follows. Component of the H1 type VI (H1-T6SS) secretion system that plays a role in the release of toxins targeting both eukaryotic and prokaryotic species. Acts as an AAA(+) ATPase that disassembles the contracted sheath, which resets the systems for reassembly of an extended sheath that is ready to fire again. This is AAA+ ATPase ClpV1 (clpV1) from Pseudomonas aeruginosa (strain ATCC 15692 / DSM 22644 / CIP 104116 / JCM 14847 / LMG 12228 / 1C / PRS 101 / PAO1).